The primary structure comprises 602 residues: Major facilitator superfamily multidrug transporter mfsB (602 aa).

Transmembrane regions (helical) follow at residues 29 to 49 (FVLALCRICEPIAFMSIFPYV), 67 to 87 (LYAGLITSSFTFAEFSAGMFW), 98 to 118 (PVLIMGLIGTAISMIVFGFAP), 128 to 148 (ALGGLLNGNIGVLQTTVAEIV), 160 to 180 (IMPFVWCLGSIIGPAMGGALA), 201 to 221 (FLLPNLVCVVVLVFGVIVGFL), 329 to 349 (IVAYGILAYHSVSFDQLIPVF), 378 to 398 (FMLAVQGVYSMIAQLWLFPFV), 411 to 431 (VLLVWPPLYMLVPYLVLLPSI), 439 to 459 (LALISKITLHVIAFPSTAILL), 468 to 486 (VLGSINGAAASTASLSRAL), and 505 to 525 (IIAWWACGLVCVTGTIQSFWM). A disordered region spans residues 527–602 (ESEPRRDSEK…RSNPLAFAED (76 aa)). A compositionally biased stretch (basic and acidic residues) spans 528–538 (SEPRRDSEKAG).

This sequence belongs to the major facilitator superfamily.

The protein localises to the membrane. In terms of biological role, major facilitator superfamily transporter that may be involved in A.fumigatus adaptation to azoles such as vorizonazole. This chain is Major facilitator superfamily multidrug transporter mfsB, found in Aspergillus fumigatus (strain ATCC MYA-4609 / CBS 101355 / FGSC A1100 / Af293) (Neosartorya fumigata).